Consider the following 298-residue polypeptide: Probable tRNA(His) guanylyltransferase (298 aa).

The Mg(2+) site is built by Asp58, Gly59, and Asp105. Residues 58-63 and 104-105 each bind GTP; these read DGRNFH and SD.

The protein belongs to the tRNA(His) guanylyltransferase family. As to quaternary structure, homotetramer. Interacts with MFN1 and MFN2; functions as a guanyl-nucleotide exchange factor/GEF for MFN2 and also probably MFN1. Requires Mg(2+) as cofactor.

Its subcellular location is the cytoplasm. It is found in the mitochondrion. It carries out the reaction a 5'-end ribonucleotide-tRNA(His) + GTP + ATP + H2O = a 5'-end phospho-guanosine-ribonucleotide-tRNA(His) + AMP + 2 diphosphate + H(+). Its function is as follows. Adds a GMP to the 5'-end of tRNA(His) after transcription and RNase P cleavage. This step is essential for proper recognition of the tRNA and for the fidelity of protein synthesis. Also functions as a guanyl-nucleotide exchange factor/GEF for the MFN1 and MFN2 mitofusins thereby regulating mitochondrial fusion. By regulating both mitochondrial dynamics and bioenergetic function, it contributes to cell survival following oxidative stress. The polypeptide is Probable tRNA(His) guanylyltransferase (Thg1l) (Mus musculus (Mouse)).